Consider the following 110-residue polypeptide: Small ribosomal subunit protein bS16 (110 aa).

The tract at residues 84–110 (KRTARNNPEKAVPRKERKAQAEAAAKS) is disordered. The span at 90–103 (NPEKAVPRKERKAQ) shows a compositional bias: basic and acidic residues.

Belongs to the bacterial ribosomal protein bS16 family.

This Nitrobacter hamburgensis (strain DSM 10229 / NCIMB 13809 / X14) protein is Small ribosomal subunit protein bS16.